The following is a 952-amino-acid chain: Leucine--tRNA ligase (952 aa).

The short motif at Pro-65 to His-76 is the 'HIGH' region element. The short motif at Lys-727 to Ser-731 is the 'KMSKS' region element. Lys-730 is a binding site for ATP.

Belongs to the class-I aminoacyl-tRNA synthetase family.

Its subcellular location is the cytoplasm. It catalyses the reaction tRNA(Leu) + L-leucine + ATP = L-leucyl-tRNA(Leu) + AMP + diphosphate. In Salinispora arenicola (strain CNS-205), this protein is Leucine--tRNA ligase.